The chain runs to 437 residues: Ribosomal protein uS12 methylthiotransferase RimO (437 aa).

Positions 4–114 constitute an MTTase N-terminal domain; it reads PRVSFVSLGC…VMNAVHEVAP (111 aa). Residues Cys-13, Cys-49, Cys-78, Cys-145, Cys-149, and Cys-152 each contribute to the [4Fe-4S] cluster site. The Radical SAM core domain occupies 131–369; it reads LTPRHYAYLK…MAKQQQISTN (239 aa). Positions 372-437 constitute a TRAM domain; it reads KKKVGKRLPV…DAYDLHGTAV (66 aa).

It belongs to the methylthiotransferase family. RimO subfamily. [4Fe-4S] cluster serves as cofactor.

It is found in the cytoplasm. It carries out the reaction L-aspartate(89)-[ribosomal protein uS12]-hydrogen + (sulfur carrier)-SH + AH2 + 2 S-adenosyl-L-methionine = 3-methylsulfanyl-L-aspartate(89)-[ribosomal protein uS12]-hydrogen + (sulfur carrier)-H + 5'-deoxyadenosine + L-methionine + A + S-adenosyl-L-homocysteine + 2 H(+). Functionally, catalyzes the methylthiolation of an aspartic acid residue of ribosomal protein uS12. The protein is Ribosomal protein uS12 methylthiotransferase RimO of Brucella abortus (strain S19).